The primary structure comprises 79 residues: Ixosin (79 aa).

The propeptide at 1–56 is removed in mature form; that stretch reads MSAHKVQIGLSSGQFRVALQVPSVRLKGLGSFHTGSIVLPSQGSLREDQISLHNQD.

In terms of biological role, has antifungal activity against C.albicans. Has antibacterial activity against the Gram-positive bacterium S.aureus and the Gram-negative bacterium E.coli. Lacks hemolytic activity against rabbit erythrocytes. The polypeptide is Ixosin (Ixodes sinensis (Hard tick)).